A 247-amino-acid chain; its full sequence is MLKATIDAEIFREAIEAISALVPECRLHTAEDGITTRAVDTANVAMIAFTLKKEAFDTFKATKSEIGVDISKMKNIFNMGGKGDLISLELADNAQKMAVSVHGYHYSITLLDTNTIRKDPNSPTINLPGKVVISGEDLNNAIKAAAVISDKIAMGINPKDQTFYMVAEGDTDHIQREFGKDELKSLSPVEARSLFSLDYLRDMGKVMSKATEVEVCLGIDHPVRFSFDIAGGNGHVEYLLAPRIEAD.

This sequence belongs to the PCNA family. Homotrimer. The subunits circularize to form a toroid; DNA passes through its center. Replication factor C (RFC) is required to load the toroid on the DNA.

In terms of biological role, sliding clamp subunit that acts as a moving platform for DNA processing. Responsible for tethering the catalytic subunit of DNA polymerase and other proteins to DNA during high-speed replication. This Methanoregula boonei (strain DSM 21154 / JCM 14090 / 6A8) protein is DNA polymerase sliding clamp.